Here is a 162-residue protein sequence, read N- to C-terminus: Transcription antitermination protein NusB (162 aa).

Belongs to the NusB family.

In terms of biological role, involved in transcription antitermination. Required for transcription of ribosomal RNA (rRNA) genes. Binds specifically to the boxA antiterminator sequence of the ribosomal RNA (rrn) operons. The chain is Transcription antitermination protein NusB from Xanthomonas euvesicatoria pv. vesicatoria (strain 85-10) (Xanthomonas campestris pv. vesicatoria).